The following is a 528-amino-acid chain: MSTVNVQIGLHELLNGSNAQIQLSVPQLVEKVLMRDEGKLTSTGAVSASTGKYTGRSPKDKFIVKEASVADKIAWGAVNQPISEEHFNKLYTKVLEYLKEKEELFVFKGFAGADRNYRLPIQVINEYAWHNLFVHQLFIRPTEEELTTHESEFTIVSAPNFKADPAVDGTNSEAFIMVSFEKRIVLIGGTEYAGEMKKSIFSIMNFLLPEQDILSMHCSANVGEEGDVALFFGLSGTGKTTLSADPNRKLIGDDEHGWSDNGVFNIEGGCYAKCVNLSHEKEPQIFDAITFGSVLENVIINDQTRIADYNDTTLTENTRAAYPMHAIDNIVLPSVAGHPNTIIFLTADASGVLPPISKLSKEQAMYHFLSGYTSKLAGTERGVTSPQATFSTCFGSPFLPLDASRYAEMLGEKIEKHDAKVFLVNTGWTGGEYGVGKRMNLGYTRAMIQAALNGELAKTETAKHDIFGLEVPLHVPGVPDEVLMPEQTWADKAAYKAKAIELANEFKANFKKFDSVSEDIINLGGPIA.

Arg-56, Tyr-192, and Lys-198 together coordinate substrate. Residues Lys-198, His-217, and 233–241 (GLSGTGKTT) each bind ATP. Mn(2+) contacts are provided by Lys-198 and His-217. Asp-254 is a Mn(2+) binding site. 3 residues coordinate ATP: Glu-282, Arg-319, and Thr-444. Arg-319 serves as a coordination point for substrate.

It belongs to the phosphoenolpyruvate carboxykinase (ATP) family. Mn(2+) is required as a cofactor.

It is found in the cytoplasm. It carries out the reaction oxaloacetate + ATP = phosphoenolpyruvate + ADP + CO2. It functions in the pathway carbohydrate biosynthesis; gluconeogenesis. Its function is as follows. Involved in the gluconeogenesis. Catalyzes the conversion of oxaloacetate (OAA) to phosphoenolpyruvate (PEP) through direct phosphoryl transfer between the nucleoside triphosphate and OAA. This is Phosphoenolpyruvate carboxykinase (ATP) from Bacillus cereus (strain ATCC 10987 / NRS 248).